We begin with the raw amino-acid sequence, 355 residues long: Isocitrate dehydrogenase [NAD] subunit gamma, mitochondrial (355 aa).

Residue Ile-1 is a transit peptide, mitochondrion. Residues Thr-82 and Asn-95 each contribute to the citrate site. Arg-98, Arg-129, and Asp-216 together coordinate substrate. Asp-216 serves as a coordination point for Mn(2+). Asn-274, Thr-275, and Asn-286 together coordinate ADP.

The protein belongs to the isocitrate and isopropylmalate dehydrogenases family. As to quaternary structure, heterooligomer of subunits alpha (IDH3A), beta (IDH3B), and gamma (IDH3G) in the apparent ratio of 2:1:1. The heterodimer containing one IDH3A and one IDH3B subunit and the heterodimer containing one IDH3A and one IDH3G subunit assemble into a heterotetramer (which contains two subunits of IDH3A, one of IDH3B and one of IDH3G) and further into the heterooctamer. Requires Mg(2+) as cofactor. Mn(2+) is required as a cofactor.

Its subcellular location is the mitochondrion. With respect to regulation, the heterotetramer and the heterodimer composed of IDH3A and IDH3G subunits can be allosterically activated by citrate (CIT) or/and ADP, and the two activators can act independently or synergistically. The heterodimer composed of IDH3A and IDH3B subunits cannot be allosterically regulated and the allosteric regulation of the heterotetramer is through the IDH3G subunit and not the IDH3B subunit. The IDH3G subunit contains the allosteric site which consists of a CIT-binding site and an ADP-binding site, and the binding of CIT and ADP causes conformational changes at the allosteric site which are transmitted to the active site in the catalytic subunit (IDH3A) through a cascade of conformational changes at the heterodimer interface, leading to stabilization of the isocitrate-binding at the active site and thus activation of the enzyme. ATP can activate the heterotetramer and the heterodimer composed of IDH3A and IDH3G subunits at low concentrations but inhibits their activities at high concentrations, whereas ATP exhibits only inhibitory effect on the heterodimer composed of IDH3A and IDH3B subunits. Its function is as follows. Regulatory subunit which plays a role in the allosteric regulation of the enzyme catalyzing the decarboxylation of isocitrate (ICT) into alpha-ketoglutarate. The heterodimer composed of the alpha (IDH3A) and beta (IDH3B) subunits and the heterodimer composed of the alpha (IDH3A) and gamma (IDH3G) subunits, have considerable basal activity but the full activity of the heterotetramer (containing two subunits of IDH3A, one of IDH3B and one of IDH3G) requires the assembly and cooperative function of both heterodimers. In Macaca fascicularis (Crab-eating macaque), this protein is Isocitrate dehydrogenase [NAD] subunit gamma, mitochondrial (IDH3G).